Consider the following 308-residue polypeptide: Putative mitochondrial transporter UCP3 (308 aa).

The Mitochondrial intermembrane portion of the chain corresponds to 1 to 10; sequence MVGLKPPEVP. A helical transmembrane segment spans residues 11-32; the sequence is PTTAVKLLGAGTAACFADLLTF. Solcar repeat units follow at residues 11–102, 111–202, and 211–296; these read PTTA…VKQL, SSIT…IKEK, and DNLP…LKRA. The Mitochondrial matrix segment spans residues 33–73; the sequence is PLDTAKVRLQIQGENQAARSAQYRGVLGTILTMVRNEGPRS. A helical transmembrane segment spans residues 74–96; that stretch reads PYNGLVAGLQRQMSFASIRIGLY. Residues 97–116 lie on the Mitochondrial intermembrane side of the membrane; the sequence is DSVKQLYTPKGSDHSSITTR. The chain crosses the membrane as a helical span at residues 117–133; that stretch reads ILAGCTTGAMAVTCAQP. At 134–179 the chain is on the mitochondrial matrix side; it reads TDVVKVRFQASIHAGPRSNRKYSGTMDAYRTIAREEGVRGLWKGIL. The helical transmembrane segment at 180–196 threads the bilayer; that stretch reads PNITRNAIVNCAEMVTY. At 197–213 the chain is on the mitochondrial intermembrane side; it reads DVIKEKVLDYHLLTDNL. A helical membrane pass occupies residues 214 to 233; that stretch reads PCHFVSAFGAGFCATVVASP. At 234–267 the chain is on the mitochondrial matrix side; that stretch reads VDVVKTRYMNSPPGQYQNPLDCMLKMVTQEGPTA. Residues 268–290 form a helical membrane-spanning segment; it reads FYKGFTPSFLRLGSWNVVMFVSY. Positions 275-297 are purine nucleotide binding; the sequence is SFLRLGSWNVVMFVSYEQLKRAL. The Mitochondrial intermembrane segment spans residues 291 to 308; that stretch reads EQLKRALMKVQMLRESPF.

Belongs to the mitochondrial carrier (TC 2.A.29) family. As to quaternary structure, interacts with HAX1; the interaction is direct and calcium-dependent.

It is found in the mitochondrion inner membrane. Its function is as follows. Putative transmembrane transporter that plays a role in mitochondrial metabolism via an as yet unclear mechanism. Originally, this mitochondrial protein was thought to act as a proton transmembrane transporter from the mitochondrial intermembrane space into the matrix, causing proton leaks through the inner mitochondrial membrane, thereby uncoupling mitochondrial membrane potential generation from ATP synthesis. However, this function is controversial and uncoupling may not be the function, or at least not the main function, but rather a consequence of more conventional metabolite transporter activity. This is Putative mitochondrial transporter UCP3 from Sus scrofa (Pig).